We begin with the raw amino-acid sequence, 647 residues long: DNA mismatch repair protein MutL (647 aa).

The interval 377-396 (EEPQAVKQSAQLWQPPKQEW) is disordered. The segment covering 387–396 (QLWQPPKQEW) has biased composition (low complexity).

It belongs to the DNA mismatch repair MutL/HexB family.

This protein is involved in the repair of mismatches in DNA. It is required for dam-dependent methyl-directed DNA mismatch repair. May act as a 'molecular matchmaker', a protein that promotes the formation of a stable complex between two or more DNA-binding proteins in an ATP-dependent manner without itself being part of a final effector complex. The protein is DNA mismatch repair protein MutL of Bacillus cereus (strain AH187).